Consider the following 211-residue polypeptide: Outer-membrane lipoprotein carrier protein (211 aa).

A signal peptide spans 1–24 (MRNRILVSACAALAMFAMQAPAHA).

It belongs to the LolA family. As to quaternary structure, monomer.

Its subcellular location is the periplasm. In terms of biological role, participates in the translocation of lipoproteins from the inner membrane to the outer membrane. Only forms a complex with a lipoprotein if the residue after the N-terminal Cys is not an aspartate (The Asp acts as a targeting signal to indicate that the lipoprotein should stay in the inner membrane). The protein is Outer-membrane lipoprotein carrier protein of Cupriavidus taiwanensis (strain DSM 17343 / BCRC 17206 / CCUG 44338 / CIP 107171 / LMG 19424 / R1) (Ralstonia taiwanensis (strain LMG 19424)).